Reading from the N-terminus, the 499-residue chain is MASNSKKKDVGSQYKVLFTLGHGSFGTVKLACHLKTKALVAIKMVELSKKNIRGIRAEIATLEKLQHPNIICLFQVLVTSKHINIVTEYIPGGNLFDIIKEDGPMHEEEARRIFGQVVSAVKYCHNQDIVHQDIKAQNILRDEEGNVKIIDFGLAIRCRSGTLLKRQCGTKSCFAPELVLQEPYDGKKADVWSLGVLLYFITTGYYPFRGSTMKEMEEKIATGTYDIPTHVSGQLENLIHQILTVPPEMRPSIEDIERHPWVKKTEVNNPTVTDPDYNIIEMLCGMGFDANEILESLQRKKYNESMGAYLILKAQVDKGLEHTSIISAKPVDQCPTPPPSPPAHPSISSLLLKRRASEPNFSLLHIQPSGEHRPVSLALPGHKVARSASMPPIALHYPEKKSNSSSFALHSGAVAAPSVGNSILEDELPVPPDQEYDMGACFGSTYTKQCDMETPSPPQKISRFKRMSKRIRACLAQLCCIPRAPKTKKKHTSSNKIAP.

The 249-residue stretch at 14 to 262 (YKVLFTLGHG…IEDIERHPWV (249 aa)) folds into the Protein kinase domain. ATP contacts are provided by residues 20–28 (LGHGSFGTV) and K43. The active-site Proton acceptor is the D133. The UBA domain maps to 274–314 (DPDYNIIEMLCGMGFDANEILESLQRKKYNESMGAYLILKA).

Belongs to the protein kinase superfamily. CAMK Ser/Thr protein kinase family. Smok subfamily.

The enzyme catalyses L-seryl-[protein] + ATP = O-phospho-L-seryl-[protein] + ADP + H(+). The catalysed reaction is L-threonyl-[protein] + ATP = O-phospho-L-threonyl-[protein] + ADP + H(+). Functionally, may play a role in sperm motility, especially in the regulation of flagellar function. The polypeptide is Putative sperm motility kinase W (Mus musculus (Mouse)).